Here is an 859-residue protein sequence, read N- to C-terminus: MARGLQGVMLRSFGARDHTATVIETISIAPHFVRVRMVSPTLFQDAEAEPAAWLRFWFPDPNGSNTEFQRAYTISEADPAAGRFAVDVVLHDPAGPASSWARTVKPGATIAVMSLMGSSRFDVPEEQPAGYLLIGDSASIPGMNGIIETVPNDVPIEMYLEQHDDNDTLIPLAKHPRLRVRWVMRRDEKSLAEAIENRDWSDWYAWATPEAAALKCVRVRLRDEFGFPKSEIHAQAYWNAGRAMGTHRATEPAATEPEVGAAPQPESAVPAPARGSWRAQAASRLLAPLKLPLVLSGVLAALVTLAQLAPFVLLVELSRLLVSGAGAHRLFTVGFAAVGLLGTGALLAAALTLWLHVIDARFARALRLRLLSKLSRLPLGWFTSRGSGSIKKLVTDDTLALHYLVTHAVPDAVAAVVAPVGVLVYLFVVDWRVALVLFGPVLVYLTITSSLTIQSGPRIVQAQRWAEKMNGEAGSYLEGQPVIRVFGAASSSFRRRLDEYIGFLVAWQRPLAGKKTLMDLATRPATFLWLIAATGTLLVATHRMDPVNLLPFMFLGTTFGARLLGIAYGLGGLRTGLLAARHLQVTLDETELAVREHPREPLDGEAPATVVFDHVTFGYRPGVPVIQDVSLTLRPGTVTALVGPSGSGKSTLATLLARFHDVERGAIRVGGQDIRSLAADELYTRVGFVLQEAQLVHGTAAENIALAVPDAPAEQVQVAAREAQIHDRVLRLPDGYDTVLGANSGLSGGERQRLTIARAILGDTPVLILDEATAFADPESEYLVQQALNRLTRDRTVLVIAHRLHTITRADQIVVLDHGRIVERGTHEELLAAGGRYCRLWDTGQGSRVAVAAAQDGTR.

The Cytoplasmic segment spans residues 1-292; that stretch reads MARGLQGVML…SRLLAPLKLP (292 aa). The 108-residue stretch at 15–122 folds into the FAD-binding FR-type domain; that stretch reads ARDHTATVIE…MSLMGSSRFD (108 aa). Residues 70–73, 87–91, and 97–98 each bind FAD; these read RAYT, DVVLH, and AS. Residues 247–267 are disordered; sequence HRATEPAATEPEVGAAPQPES. Residues 293–313 form a helical membrane-spanning segment; that stretch reads LVLSGVLAALVTLAQLAPFVL. Positions 293 to 575 constitute an ABC transmembrane type-1 domain; it reads LVLSGVLAAL…IAYGLGGLRT (283 aa). Residues 314 to 334 are Periplasmic-facing; it reads LVELSRLLVSGAGAHRLFTVG. A helical membrane pass occupies residues 335–355; the sequence is FAAVGLLGTGALLAAALTLWL. Residues 356 to 408 are Cytoplasmic-facing; the sequence is HVIDARFARALRLRLLSKLSRLPLGWFTSRGSGSIKKLVTDDTLALHYLVTHA. A helical membrane pass occupies residues 409 to 429; sequence VPDAVAAVVAPVGVLVYLFVV. Residues 430–432 lie on the Periplasmic side of the membrane; it reads DWR. Residues 433-453 form a helical membrane-spanning segment; sequence VALVLFGPVLVYLTITSSLTI. Topologically, residues 454–519 are cytoplasmic; that stretch reads QSGPRIVQAQ…PLAGKKTLMD (66 aa). A helical membrane pass occupies residues 520 to 540; it reads LATRPATFLWLIAATGTLLVA. Residues 541-548 lie on the Periplasmic side of the membrane; that stretch reads THRMDPVN. Residues 549-569 form a helical membrane-spanning segment; that stretch reads LLPFMFLGTTFGARLLGIAYG. Residues 570–859 lie on the Cytoplasmic side of the membrane; that stretch reads LGGLRTGLLA…AVAAAQDGTR (290 aa). The 234-residue stretch at 610-843 folds into the ABC transporter domain; sequence VVFDHVTFGY…GGRYCRLWDT (234 aa). 643-650 is a binding site for ATP; the sequence is GPSGSGKS.

Belongs to the ABC transporter superfamily. Siderophore-Fe(3+) uptake transporter (SIUT) (TC 3.A.1.21) family. Forms a heterodimer with IrtB. It depends on FAD as a cofactor.

It is found in the cell inner membrane. Part of the ABC transporter complex IrtAB involved in the import of iron-bound mycobactin (Fe-MBT) and carboxymycobactin (Fe-cMBT). Mycobactins are then reduced by the siderophore interaction domain to facilitate iron release in the bacterial cell. Transmembrane domains (TMD) form a pore in the membrane and the ATP-binding domain (NBD) is responsible for energy generation. Required for replication in human macrophages and in mouse lungs. The sequence is that of Mycobactin import ATP-binding/permease protein IrtA (irtA) from Mycobacterium tuberculosis (strain ATCC 25618 / H37Rv).